Consider the following 120-residue polypeptide: Large ribosomal subunit protein bL12 (120 aa).

The protein belongs to the bacterial ribosomal protein bL12 family. As to quaternary structure, homodimer. Part of the ribosomal stalk of the 50S ribosomal subunit. Forms a multimeric L10(L12)X complex, where L10 forms an elongated spine to which 2 to 4 L12 dimers bind in a sequential fashion. Binds GTP-bound translation factors.

Its function is as follows. Forms part of the ribosomal stalk which helps the ribosome interact with GTP-bound translation factors. Is thus essential for accurate translation. The chain is Large ribosomal subunit protein bL12 from Aeromonas salmonicida (strain A449).